The primary structure comprises 144 residues: Large ribosomal subunit protein uL16 (144 aa).

The protein belongs to the universal ribosomal protein uL16 family. As to quaternary structure, part of the 50S ribosomal subunit.

Binds 23S rRNA and is also seen to make contacts with the A and possibly P site tRNAs. This chain is Large ribosomal subunit protein uL16, found in Listeria innocua serovar 6a (strain ATCC BAA-680 / CLIP 11262).